A 181-amino-acid polypeptide reads, in one-letter code: Large ribosomal subunit protein uL5 (181 aa).

It belongs to the universal ribosomal protein uL5 family. Part of the 50S ribosomal subunit; part of the 5S rRNA/L5/L18/L25 subcomplex. Contacts the 5S rRNA and the P site tRNA. Forms a bridge to the 30S subunit in the 70S ribosome.

In terms of biological role, this is one of the proteins that bind and probably mediate the attachment of the 5S RNA into the large ribosomal subunit, where it forms part of the central protuberance. In the 70S ribosome it contacts protein S13 of the 30S subunit (bridge B1b), connecting the 2 subunits; this bridge is implicated in subunit movement. Contacts the P site tRNA; the 5S rRNA and some of its associated proteins might help stabilize positioning of ribosome-bound tRNAs. This is Large ribosomal subunit protein uL5 from Mesomycoplasma hyopneumoniae (strain 232) (Mycoplasma hyopneumoniae).